The sequence spans 366 residues: Mitogen-activated protein kinase CPK1 (366 aa).

The Protein kinase domain maps to 17–302 (KLEEIVGEGA…SPSKRITVEE (286 aa)). ATP-binding positions include 22–30 (VGEGAYGLV) and K45. The Proton acceptor role is filled by D140. T181 is subject to Phosphothreonine. Residues 181-183 (TEY) carry the TXY motif. Y183 carries the post-translational modification Phosphotyrosine.

It belongs to the protein kinase superfamily. CMGC Ser/Thr protein kinase family. MAP kinase subfamily. The cofactor is Mg(2+). Post-translationally, dually phosphorylated on Thr-181 and Tyr-183, which activates the enzyme.

It carries out the reaction L-seryl-[protein] + ATP = O-phospho-L-seryl-[protein] + ADP + H(+). The enzyme catalyses L-threonyl-[protein] + ATP = O-phospho-L-threonyl-[protein] + ADP + H(+). With respect to regulation, activated by tyrosine and threonine phosphorylation. Responds to activation by environmental stress by phosphorylating downstream targets. In Cryptococcus neoformans var. neoformans serotype D (strain B-3501A) (Filobasidiella neoformans), this protein is Mitogen-activated protein kinase CPK1 (CPK1).